The sequence spans 157 residues: Protein Smg (157 aa).

The protein belongs to the Smg family.

In Buchnera aphidicola subsp. Acyrthosiphon pisum (strain 5A), this protein is Protein Smg.